The sequence spans 444 residues: Phosphoglucosamine mutase (444 aa).

Catalysis depends on Ser-101, which acts as the Phosphoserine intermediate. Mg(2+) contacts are provided by Ser-101, Asp-240, Asp-242, and Asp-244. A Phosphoserine modification is found at Ser-101.

Belongs to the phosphohexose mutase family. The cofactor is Mg(2+). In terms of processing, activated by phosphorylation.

It catalyses the reaction alpha-D-glucosamine 1-phosphate = D-glucosamine 6-phosphate. Its function is as follows. Catalyzes the conversion of glucosamine-6-phosphate to glucosamine-1-phosphate. In Aeromonas hydrophila subsp. hydrophila (strain ATCC 7966 / DSM 30187 / BCRC 13018 / CCUG 14551 / JCM 1027 / KCTC 2358 / NCIMB 9240 / NCTC 8049), this protein is Phosphoglucosamine mutase.